We begin with the raw amino-acid sequence, 145 residues long: Synaptojanin-2-binding protein (145 aa).

Topologically, residues 1-117 (MNGRVDYLVT…GPQGEGEPSG (117 aa)) are cytoplasmic. The PDZ domain maps to 13–100 (EINLTRGPSG…AVSLRVQHRL (88 aa)). The helical; Anchor for type IV membrane protein transmembrane segment at 118–138 (IPIAMVLVPVFALTMVAAWAF) threads the bilayer. Topologically, residues 139 to 145 (MRYRQRL) are mitochondrial intermembrane.

In terms of assembly, binds (via the PDZ domain) to isoform 2A of SYNJ2 (via the unique motif in the C-terminus). Interacts (via C-terminus) with RALBP1. Interacts (via PDZ domain) with ACVR2A (via C-terminus) and ACVR2B (via C-terminus). Forms a ternary complex with ACVR2A and RALBP1. Interacts with MAPK12. Interacts with DLL1; enhances DLL1 protein stability, and promotes notch signaling in endothelial cells.

The protein localises to the mitochondrion outer membrane. It localises to the cytoplasm. The protein resides in the perinuclear region. Regulates endocytosis of activin type 2 receptor kinases through the Ral/RALBP1-dependent pathway and may be involved in suppression of activin-induced signal transduction. This chain is Synaptojanin-2-binding protein, found in Bos taurus (Bovine).